A 187-amino-acid chain; its full sequence is Shikimate kinase (187 aa).

14–19 (GSGKST) contributes to the ATP binding site. Residue Ser-18 coordinates Mg(2+). Substrate is bound by residues Asp-36, Arg-60, and Gly-82. Arg-120 provides a ligand contact to ATP. Arg-147 contributes to the substrate binding site.

The protein belongs to the shikimate kinase family. As to quaternary structure, monomer. Requires Mg(2+) as cofactor.

It is found in the cytoplasm. It carries out the reaction shikimate + ATP = 3-phosphoshikimate + ADP + H(+). Its pathway is metabolic intermediate biosynthesis; chorismate biosynthesis; chorismate from D-erythrose 4-phosphate and phosphoenolpyruvate: step 5/7. Catalyzes the specific phosphorylation of the 3-hydroxyl group of shikimic acid using ATP as a cosubstrate. In Chlorobaculum parvum (strain DSM 263 / NCIMB 8327) (Chlorobium vibrioforme subsp. thiosulfatophilum), this protein is Shikimate kinase.